Reading from the N-terminus, the 233-residue chain is tRNA (guanine-N(1)-)-methyltransferase (233 aa).

S-adenosyl-L-methionine-binding positions include glycine 110 and 130-135 (IGDYVM).

Belongs to the RNA methyltransferase TrmD family. Homodimer.

The protein localises to the cytoplasm. It catalyses the reaction guanosine(37) in tRNA + S-adenosyl-L-methionine = N(1)-methylguanosine(37) in tRNA + S-adenosyl-L-homocysteine + H(+). Specifically methylates guanosine-37 in various tRNAs. The chain is tRNA (guanine-N(1)-)-methyltransferase from Finegoldia magna (strain ATCC 29328 / DSM 20472 / WAL 2508) (Peptostreptococcus magnus).